Consider the following 161-residue polypeptide: Nucleotide-binding protein Pnuc_0290 (161 aa).

Belongs to the YajQ family.

In terms of biological role, nucleotide-binding protein. The sequence is that of Nucleotide-binding protein Pnuc_0290 from Polynucleobacter asymbioticus (strain DSM 18221 / CIP 109841 / QLW-P1DMWA-1) (Polynucleobacter necessarius subsp. asymbioticus).